Reading from the N-terminus, the 332-residue chain is Endonuclease 8-like 2 (332 aa).

The Schiff-base intermediate with DNA role is filled by P2. E3 acts as the Proton donor in catalysis. The active-site Proton donor; for beta-elimination activity is K50. The residue at position 50 (K50) is an N6-acetyllysine. The segment at 59 to 121 (DEEMGPPGSS…EDDSEYLERD (63 aa)) is disordered. S68 is modified (phosphoserine). A compositionally biased stretch (basic and acidic residues) spans 74–84 (PQKEVQKEGAA). Over residues 94–104 (GQKTLDGSSRS) the composition is skewed to polar residues. Residue K154 is modified to N6-acetyllysine. N231 serves as a coordination point for DNA. Residues 284-320 (QVYQKEQCPAGHQVMKEAFGPEDGLQRLTWWCPQCQP) form an FPG-type zinc finger. The active-site Proton donor; for delta-elimination activity is R310.

This sequence belongs to the FPG family. Binds EP300. In terms of tissue distribution, detected in testis, skeletal muscle, heart, brain, placenta, lung, pancreas, kidney and liver.

It is found in the nucleus. The catalysed reaction is 2'-deoxyribonucleotide-(2'-deoxyribose 5'-phosphate)-2'-deoxyribonucleotide-DNA = a 3'-end 2'-deoxyribonucleotide-(2,3-dehydro-2,3-deoxyribose 5'-phosphate)-DNA + a 5'-end 5'-phospho-2'-deoxyribonucleoside-DNA + H(+). With respect to regulation, acetylation of Lys-50 leads to loss of DNA nicking activity. Acetylation of Lys-154 has no effect. Functionally, involved in base excision repair of DNA damaged by oxidation or by mutagenic agents. Has DNA glycosylase activity towards 5-hydroxyuracil and other oxidized derivatives of cytosine with a preference for mismatched double-stranded DNA (DNA bubbles). Has low or no DNA glycosylase activity towards thymine glycol, 2-hydroxyadenine, hypoxanthine and 8-oxoguanine. Has AP (apurinic/apyrimidinic) lyase activity and introduces nicks in the DNA strand. Cleaves the DNA backbone by beta-delta elimination to generate a single-strand break at the site of the removed base with both 3'- and 5'-phosphates. The chain is Endonuclease 8-like 2 (NEIL2) from Homo sapiens (Human).